We begin with the raw amino-acid sequence, 267 residues long: Dihydropteroate synthase (267 aa).

Positions 1–251 constitute a Pterin-binding domain; it reads MTKTKIMGIL…NVELNAKLAK (251 aa). Asn-11 lines the Mg(2+) pocket. (7,8-dihydropterin-6-yl)methyl diphosphate-binding positions include Thr-51, Asp-84, Asn-103, Asp-167, Lys-203, and 239–241; that span reads RVH.

The protein belongs to the DHPS family. In terms of assembly, homodimer. Mg(2+) is required as a cofactor.

It catalyses the reaction (7,8-dihydropterin-6-yl)methyl diphosphate + 4-aminobenzoate = 7,8-dihydropteroate + diphosphate. The protein operates within cofactor biosynthesis; tetrahydrofolate biosynthesis; 7,8-dihydrofolate from 2-amino-4-hydroxy-6-hydroxymethyl-7,8-dihydropteridine diphosphate and 4-aminobenzoate: step 1/2. Functionally, catalyzes the condensation of para-aminobenzoate (pABA) with 6-hydroxymethyl-7,8-dihydropterin diphosphate (DHPt-PP) to form 7,8-dihydropteroate (H2Pte), the immediate precursor of folate derivatives. In Staphylococcus aureus (strain MRSA252), this protein is Dihydropteroate synthase (folP).